The sequence spans 1768 residues: Maestro heat-like repeat-containing protein family member 1 homolog (1768 aa).

6 HEAT repeats span residues 4–47 (TSQV…HQPN), 164–203 (VHNPFGLVPFLTDILSRTVPLLQHVKTDPLRCAWARAICS), 816–856 (QRLQ…AVHP), 1166–1204 (QSQMQIYLSAIFEMLTDRQSHVSSAAAQLLTYAVMARGA), 1483–1521 (EQLLVKCIRRLEDSLTDPSLRIRKLCVKGLGELSECSST), and 1731–1768 (TISRELVFTGLVALLKDSEDVNVRISATRAIANLHDFH).

This sequence belongs to the MROH1 family. As to quaternary structure, homooligomer; homooligomerizes at lysosome scission sites.

It is found in the lysosome membrane. Functionally, lysosome fission factor. Recruited to lysosomes by rab-7 at scission sites and homooligomerizes to mediate the constriction and scission of lysosomal tubules. May sever membranes by inserting amphipathic helices into one bilayer leaflet. Lysosome fission is required to maintain their steady-state number, shape, size, composition and function, and to accomplish regeneration. This is Maestro heat-like repeat-containing protein family member 1 homolog from Caenorhabditis elegans.